A 111-amino-acid chain; its full sequence is Cytochrome c (111 aa).

Residue Ala-1 is modified to N-acetylalanine. Residues Cys-22, Cys-25, and His-26 each coordinate heme c. Lys-80 is modified (N6,N6,N6-trimethyllysine). Met-88 contributes to the heme c binding site. Position 94 is an N6,N6,N6-trimethyllysine (Lys-94).

It belongs to the cytochrome c family. In terms of processing, binds 1 heme c group covalently per subunit.

It localises to the mitochondrion intermembrane space. Functionally, electron carrier protein. The oxidized form of the cytochrome c heme group can accept an electron from the heme group of the cytochrome c1 subunit of cytochrome reductase. Cytochrome c then transfers this electron to the cytochrome oxidase complex, the final protein carrier in the mitochondrial electron-transport chain. This Cannabis sativa (Hemp) protein is Cytochrome c.